A 163-amino-acid polypeptide reads, in one-letter code: MADSSFDIVSKVDRQEVDNALNQAAKELATRFDFRGTDTTIAWKGDEAIELTSSTEERVKAAVDVFKEKLIRRDISMKAFDAGEPQASGKTYKVNGTLKQGISSENAKKITKLIRDEGPKGVKTQIQGDEIRVSSKKRDDLQAVIAMLKQADLDVALQFVNYR.

The protein belongs to the YajQ family.

Functionally, nucleotide-binding protein. In Mycobacterium avium (strain 104), this protein is Nucleotide-binding protein MAV_4575.